The primary structure comprises 485 residues: ATP-dependent 6-phosphofructokinase (485 aa).

Residues glycine 105, 171–172 (RG), and 196–199 (GDGT) each bind ATP. Aspartate 197 contributes to the Mg(2+) binding site. Residues 225 to 227 (TID), 270 to 272 (MGR), glutamate 323, and 378 to 381 (YMIR) contribute to the substrate site. Aspartate 227 serves as the catalytic Proton acceptor. The short motif at 483 to 485 (SKL) is the Peroxisomal targeting signal element.

This sequence belongs to the phosphofructokinase type A (PFKA) family. PPi-dependent PFK group II subfamily. Atypical ATP-dependent clade 'X' sub-subfamily. Homotetramer. Requires Mg(2+) as cofactor.

It localises to the glycosome. It carries out the reaction beta-D-fructose 6-phosphate + ATP = beta-D-fructose 1,6-bisphosphate + ADP + H(+). Its pathway is carbohydrate degradation; glycolysis; D-glyceraldehyde 3-phosphate and glycerone phosphate from D-glucose: step 3/4. Its activity is regulated as follows. Allosterically activated by AMP. Its function is as follows. Catalyzes the phosphorylation of D-fructose 6-phosphate to fructose 1,6-bisphosphate by ATP, the first committing step of glycolysis. In Trypanosoma cruzi (strain CL Brener), this protein is ATP-dependent 6-phosphofructokinase.